The chain runs to 360 residues: Chorismate synthase (360 aa).

The NADP(+) site is built by Arg48 and Arg54. FMN contacts are provided by residues 125–127 (RSS), 246–247 (NA), Gly286, 301–305 (KPTSS), and Arg327.

This sequence belongs to the chorismate synthase family. As to quaternary structure, homotetramer. Requires FMNH2 as cofactor.

The catalysed reaction is 5-O-(1-carboxyvinyl)-3-phosphoshikimate = chorismate + phosphate. The protein operates within metabolic intermediate biosynthesis; chorismate biosynthesis; chorismate from D-erythrose 4-phosphate and phosphoenolpyruvate: step 7/7. In terms of biological role, catalyzes the anti-1,4-elimination of the C-3 phosphate and the C-6 proR hydrogen from 5-enolpyruvylshikimate-3-phosphate (EPSP) to yield chorismate, which is the branch point compound that serves as the starting substrate for the three terminal pathways of aromatic amino acid biosynthesis. This reaction introduces a second double bond into the aromatic ring system. This is Chorismate synthase from Actinobacillus succinogenes (strain ATCC 55618 / DSM 22257 / CCUG 43843 / 130Z).